The primary structure comprises 259 residues: PF03932 family protein CutC (259 aa).

This sequence belongs to the CutC family. In terms of assembly, homodimer.

The protein localises to the cytoplasm. This chain is PF03932 family protein CutC, found in Salmonella typhi.